The sequence spans 344 residues: Dihydroorotate dehydrogenase (quinone) (344 aa).

Residues 64–68 (AGLDK) and Thr-88 each bind FMN. Lys-68 contributes to the substrate binding site. A substrate-binding site is contributed by 113-117 (NRMGF). Asn-144 and Asn-177 together coordinate FMN. Asn-177 is a binding site for substrate. The Nucleophile role is filled by Ser-180. A substrate-binding site is contributed by Asn-182. Residues Lys-222 and Thr-250 each contribute to the FMN site. 251–252 (NT) is a substrate binding site. Residues Gly-273, Gly-302, and 323–324 (YS) contribute to the FMN site.

It belongs to the dihydroorotate dehydrogenase family. Type 2 subfamily. As to quaternary structure, monomer. It depends on FMN as a cofactor.

The protein localises to the cell membrane. It carries out the reaction (S)-dihydroorotate + a quinone = orotate + a quinol. It participates in pyrimidine metabolism; UMP biosynthesis via de novo pathway; orotate from (S)-dihydroorotate (quinone route): step 1/1. Its function is as follows. Catalyzes the conversion of dihydroorotate to orotate with quinone as electron acceptor. In Polynucleobacter asymbioticus (strain DSM 18221 / CIP 109841 / QLW-P1DMWA-1) (Polynucleobacter necessarius subsp. asymbioticus), this protein is Dihydroorotate dehydrogenase (quinone).